Here is a 286-residue protein sequence, read N- to C-terminus: Protease HtpX homolog (286 aa).

2 helical membrane-spanning segments follow: residues 6 to 26 (TCFL…YVGG) and 28 to 48 (QGMI…YFFS). Residue His130 coordinates Zn(2+). Glu131 is a catalytic residue. A Zn(2+)-binding site is contributed by His134. Transmembrane regions (helical) follow at residues 140 to 160 (ILTG…ANFA) and 178 to 198 (AIML…QMAI). Glu203 contributes to the Zn(2+) binding site.

The protein belongs to the peptidase M48B family. The cofactor is Zn(2+).

The protein resides in the cell inner membrane. This Campylobacter curvus (strain 525.92) protein is Protease HtpX homolog.